We begin with the raw amino-acid sequence, 492 residues long: 3-octaprenyl-4-hydroxybenzoate carboxy-lyase (492 aa).

N175 serves as a coordination point for Mn(2+). Residues 178–180, 192–194, and 197–198 contribute to the prenylated FMN site; these read IYR, RWL, and RG. E241 contacts Mn(2+). D290 (proton donor) is an active-site residue.

The protein belongs to the UbiD family. Homohexamer. The cofactor is prenylated FMN. Mn(2+) serves as cofactor.

It localises to the cell membrane. It catalyses the reaction a 4-hydroxy-3-(all-trans-polyprenyl)benzoate + H(+) = a 2-(all-trans-polyprenyl)phenol + CO2. It participates in cofactor biosynthesis; ubiquinone biosynthesis. Functionally, catalyzes the decarboxylation of 3-octaprenyl-4-hydroxy benzoate to 2-octaprenylphenol, an intermediate step in ubiquinone biosynthesis. The sequence is that of 3-octaprenyl-4-hydroxybenzoate carboxy-lyase from Salmonella typhimurium (strain LT2 / SGSC1412 / ATCC 700720).